We begin with the raw amino-acid sequence, 450 residues long: Ornithine decarboxylase (450 aa).

Lysine 59 bears the N6-(pyridoxal phosphate)lysine mark. Residues serine 190, glycine 227, and 264–267 contribute to the pyridoxal 5'-phosphate site; that span reads EPGR. Serine 293 bears the Phosphoserine; by CK2 mark. 321–322 lines the substrate pocket; that stretch reads YD. Cysteine 350 functions as the Proton donor; shared with dimeric partner in the catalytic mechanism. Aspartate 351 is a substrate binding site. Tyrosine 379 contacts pyridoxal 5'-phosphate.

It belongs to the Orn/Lys/Arg decarboxylase class-II family. As to quaternary structure, homodimer. Only the dimer is catalytically active, as the active sites are constructed of residues from both monomers. It depends on pyridoxal 5'-phosphate as a cofactor.

It catalyses the reaction L-ornithine + H(+) = putrescine + CO2. It participates in amine and polyamine biosynthesis; putrescine biosynthesis via L-ornithine pathway; putrescine from L-ornithine: step 1/1. Inhibited by antizymes (AZs) in response to polyamine levels. AZs inhibit the assembly of the functional homodimer by binding to ODC monomers and targeting them for ubiquitin-independent proteolytic destruction by the 26S proteasome. Catalyzes the first and rate-limiting step of polyamine biosynthesis that converts ornithine into putrescine, which is the precursor for the polyamines, spermidine and spermine. Polyamines are essential for cell proliferation and are implicated in cellular processes, ranging from DNA replication to apoptosis. This is Ornithine decarboxylase (ODC1) from Gallus gallus (Chicken).